The chain runs to 1289 residues: Pesticidal crystal protein Cry5Ab (1289 aa).

The disordered stretch occupies residues 1263–1289 (PLPTDDQNSEGNTASSTNSDTSMNNNQ). The segment covering 1274–1289 (NTASSTNSDTSMNNNQ) has biased composition (low complexity).

This sequence belongs to the delta endotoxin family.

Functionally, endotoxin with nematicidal activity. In Bacillus thuringiensis subsp. darmstadiensis, this protein is Pesticidal crystal protein Cry5Ab (cry5Ab).